Consider the following 142-residue polypeptide: Virulence-associated membrane protein 1 (142 aa).

The N-terminal stretch at 1–20 is a signal peptide; it reads MRGILVALTAALIFCSLTPA. The chain crosses the membrane as a helical span at residues 59-79; that stretch reads IAIAVGTALVTLVSAGVGGML.

Monomer.

It is found in the membrane. During infection, may play a role in establishing and maintaining biotrophy; the formation of a tight interaction zone between the host and the pathogen. In Mycosarcoma maydis (Corn smut fungus), this protein is Virulence-associated membrane protein 1.